Reading from the N-terminus, the 238-residue chain is Enolase-phosphatase E1 (238 aa).

The Mg(2+) site is built by aspartate 14 and glutamate 16. Substrate contacts are provided by residues 128–129 and lysine 165; that span reads SS. Aspartate 192 is a Mg(2+) binding site.

The protein belongs to the HAD-like hydrolase superfamily. MasA/MtnC family. In terms of assembly, monomer. Mg(2+) is required as a cofactor.

The protein localises to the cytoplasm. It is found in the nucleus. It catalyses the reaction 5-methylsulfanyl-2,3-dioxopentyl phosphate + H2O = 1,2-dihydroxy-5-(methylsulfanyl)pent-1-en-3-one + phosphate. It functions in the pathway amino-acid biosynthesis; L-methionine biosynthesis via salvage pathway; L-methionine from S-methyl-5-thio-alpha-D-ribose 1-phosphate: step 3/6. It participates in amino-acid biosynthesis; L-methionine biosynthesis via salvage pathway; L-methionine from S-methyl-5-thio-alpha-D-ribose 1-phosphate: step 4/6. Its function is as follows. Bifunctional enzyme that catalyzes the enolization of 2,3-diketo-5-methylthiopentyl-1-phosphate (DK-MTP-1-P) into the intermediate 2-hydroxy-3-keto-5-methylthiopentenyl-1-phosphate (HK-MTPenyl-1-P), which is then dephosphorylated to form the acireductone 1,2-dihydroxy-3-keto-5-methylthiopentene (DHK-MTPene). The chain is Enolase-phosphatase E1 from Fusarium vanettenii (strain ATCC MYA-4622 / CBS 123669 / FGSC 9596 / NRRL 45880 / 77-13-4) (Fusarium solani subsp. pisi).